We begin with the raw amino-acid sequence, 153 residues long: Arginine repressor (153 aa).

Belongs to the ArgR family.

The protein resides in the cytoplasm. Its pathway is amino-acid biosynthesis; L-arginine biosynthesis [regulation]. Its function is as follows. Regulates arginine biosynthesis genes. The sequence is that of Arginine repressor from Actinobacillus pleuropneumoniae serotype 3 (strain JL03).